Here is a 423-residue protein sequence, read N- to C-terminus: Type II methyltransferase M.NlaIV (423 aa).

An SAM-dependent MTase C5-type domain is found at 4-423 (IKFIDLFSGM…AVSERLLHTL (420 aa)). The active site involves C80.

The protein belongs to the class I-like SAM-binding methyltransferase superfamily. C5-methyltransferase family.

It catalyses the reaction a 2'-deoxycytidine in DNA + S-adenosyl-L-methionine = a 5-methyl-2'-deoxycytidine in DNA + S-adenosyl-L-homocysteine + H(+). Its function is as follows. A methylase that recognizes the double-stranded sequence 5'-GGNNCC-3', methylates C-? on both strands, and protects the DNA from cleavage by the NlaIV endonuclease. The polypeptide is Type II methyltransferase M.NlaIV (nlaIVM) (Neisseria lactamica).